The primary structure comprises 417 residues: MFNKFKEKLGSFKKALSKTIDEKAVEVEPVVVEQMPQSEESLEEEIEPIVEEEALEAALEAESSEAETEAASPAIAHVPIEDLKKAEYRKKLKDLKKVGEKKVEEEKPPEEKKSFFKKVVPKVGFAQKAKALVFNREVYLDNKDLEEPLWELEMGLLESDLALSVSEAIVESVKNQLTGTTKRIGSNTGEIVEAALKKAILEVVSANTFDFDEYVKNREKPVHIVFVGINGTGKTTSISKITNRLLKSGYSVVLAAGDTFRAGAIDQLGIHANRLGVKMIKHQAGADPAAVIYDAVQYAKAHKIDFVLSDTAGRMHTNMNLMAQMEKICRVSTPDLIIFVDEAVAGNDAVERAAQFNEAVPIDGSILTKIDADAKGGAAISIAYITGKPILFFGIGQGYEDLKKFDPEWFVDQLFNQ.

GTP is bound by residues 228–235 (GINGTGKT), 310–314 (DTAGR), and 368–371 (TKID).

It belongs to the GTP-binding SRP family. FtsY subfamily. In terms of assembly, part of the signal recognition particle protein translocation system, which is composed of SRP and FtsY.

The protein localises to the cell membrane. Its subcellular location is the cytoplasm. The enzyme catalyses GTP + H2O = GDP + phosphate + H(+). Functionally, involved in targeting and insertion of nascent membrane proteins into the cytoplasmic membrane. Acts as a receptor for the complex formed by the signal recognition particle (SRP) and the ribosome-nascent chain (RNC). This Methanosarcina acetivorans (strain ATCC 35395 / DSM 2834 / JCM 12185 / C2A) protein is Signal recognition particle receptor FtsY.